We begin with the raw amino-acid sequence, 541 residues long: Chaperonin GroEL 2 (541 aa).

Residues 29–32, 86–90, G413, 476–478, and D492 each bind ATP; these read TLGP, DGTTT, and NAA.

Belongs to the chaperonin (HSP60) family. As to quaternary structure, forms a cylinder of 14 subunits composed of two heptameric rings stacked back-to-back. Interacts with the co-chaperonin GroES.

It is found in the secreted. It localises to the capsule. Its subcellular location is the cell surface. The protein localises to the cell wall. It catalyses the reaction ATP + H2O + a folded polypeptide = ADP + phosphate + an unfolded polypeptide.. Together with its co-chaperonin GroES, plays an essential role in assisting protein folding. The GroEL-GroES system forms a nano-cage that allows encapsulation of the non-native substrate proteins and provides a physical environment optimized to promote and accelerate protein folding. The sequence is that of Chaperonin GroEL 2 from Mycobacterium leprae (strain TN).